The sequence spans 354 residues: Galactose-1-phosphate uridylyltransferase (354 aa).

The disordered stretch occupies residues 36-72; the sequence is TVTTSEVRRDPLLGDSAPSRLAPQGRTYHPPADQCPL. Positions 70, 73, and 114 each coordinate Zn(2+). UDP-alpha-D-glucose is bound at residue Asn154. His165 lines the Zn(2+) pocket. His167 serves as the catalytic Tele-UMP-histidine intermediate. Residues Gln169 and Gln332 each coordinate UDP-alpha-D-glucose.

It belongs to the galactose-1-phosphate uridylyltransferase type 1 family. The cofactor is Zn(2+).

It catalyses the reaction alpha-D-galactose 1-phosphate + UDP-alpha-D-glucose = alpha-D-glucose 1-phosphate + UDP-alpha-D-galactose. Its pathway is carbohydrate metabolism; galactose metabolism. This Streptomyces lividans protein is Galactose-1-phosphate uridylyltransferase (galT).